The following is a 237-amino-acid chain: Dihydroceramide fatty acyl 2-hydroxylase FAH2 (237 aa).

2 helical membrane-spanning segments follow: residues 54-74 (VWWAIPTIWLPVVCYVLSISA) and 77-97 (GLTFPQIGLIVAFGVLTWTLL). Residues His102, His107, His123, His126, and His127 each coordinate Zn(2+). Helical transmembrane passes span 134–154 (LRLVFPPTATAILLVPLWKLL) and 156–176 (LLATPATAPAILGGILFGYVM). 5 residues coordinate Zn(2+): His181, His185, His201, His204, and His205.

The protein belongs to the sterol desaturase family. Interacts with CYTB5-A, CYTB5-B, CYTB5-C and CYTB5-D. Requires Zn(2+) as cofactor. In terms of tissue distribution, expressed in leaves, roots, flowers and seeds.

Its subcellular location is the endoplasmic reticulum membrane. The catalysed reaction is an N-(1,2-saturated acyl)sphinganine + 2 Fe(II)-[cytochrome b5] + O2 + 2 H(+) = an N-[(2'R)-hydroxyacyl]sphinganine + 2 Fe(III)-[cytochrome b5] + H2O. In terms of biological role, fatty acid 2-hydroxylase involved in the alpha-hydroxylation of the long-chain fatty acid (LCFA) palmitic acid. Probably involved in the resistance response to oxidative stress. The polypeptide is Dihydroceramide fatty acyl 2-hydroxylase FAH2 (Arabidopsis thaliana (Mouse-ear cress)).